The primary structure comprises 246 residues: Pyridoxine 5'-phosphate synthase (246 aa).

Residue Asn12 coordinates 3-amino-2-oxopropyl phosphate. 1-deoxy-D-xylulose 5-phosphate is bound at residue 14 to 15 (DH). Arg23 is a binding site for 3-amino-2-oxopropyl phosphate. Catalysis depends on His48, which acts as the Proton acceptor. Positions 50 and 55 each coordinate 1-deoxy-D-xylulose 5-phosphate. Glu75 acts as the Proton acceptor in catalysis. Thr105 lines the 1-deoxy-D-xylulose 5-phosphate pocket. His196 (proton donor) is an active-site residue. 3-amino-2-oxopropyl phosphate contacts are provided by residues Gly197 and 218–219 (GH).

The protein belongs to the PNP synthase family. Homooctamer; tetramer of dimers.

The protein localises to the cytoplasm. It carries out the reaction 3-amino-2-oxopropyl phosphate + 1-deoxy-D-xylulose 5-phosphate = pyridoxine 5'-phosphate + phosphate + 2 H2O + H(+). It functions in the pathway cofactor biosynthesis; pyridoxine 5'-phosphate biosynthesis; pyridoxine 5'-phosphate from D-erythrose 4-phosphate: step 5/5. Functionally, catalyzes the complicated ring closure reaction between the two acyclic compounds 1-deoxy-D-xylulose-5-phosphate (DXP) and 3-amino-2-oxopropyl phosphate (1-amino-acetone-3-phosphate or AAP) to form pyridoxine 5'-phosphate (PNP) and inorganic phosphate. This is Pyridoxine 5'-phosphate synthase from Pseudomonas putida (strain ATCC 47054 / DSM 6125 / CFBP 8728 / NCIMB 11950 / KT2440).